The primary structure comprises 43 residues: Hemolysin H3C (43 aa).

Residue M1 is modified to N-formylmethionine.

Belongs to the staphylococcal hemolytic protein family.

Its subcellular location is the secreted. Virulence factor. Causes hemolysis of erythrocytes from sheep (HD(50)=2.63 mM), rabbit (HD(50)=2.37 mM), guinea pig (HD(50)=1.98 mM), dog (HD(50)=1.02 mM) and human (HD(50)=2.07 mM). Acts synergistically with beta-hemolysins from S.aureus ATCC 25923. Cytotoxic towards human dermal fibroblasts. This chain is Hemolysin H3C, found in Staphylococcus cohnii subsp. cohnii.